Here is a 60-residue protein sequence, read N- to C-terminus: Small ribosomal subunit protein bS21 (60 aa).

A disordered region spans residues 36 to 60; the sequence is QFFETPQEKHKRKEATRRRQRSRRR. Basic residues predominate over residues 44-60; the sequence is KHKRKEATRRRQRSRRR.

It belongs to the bacterial ribosomal protein bS21 family.

The sequence is that of Small ribosomal subunit protein bS21 (rpsU) from Synechocystis sp. (strain ATCC 27184 / PCC 6803 / Kazusa).